Here is a 139-residue protein sequence, read N- to C-terminus: Aspartate 1-decarboxylase (139 aa).

S25 (schiff-base intermediate with substrate; via pyruvic acid) is an active-site residue. S25 carries the post-translational modification Pyruvic acid (Ser). T57 is a substrate binding site. Y58 serves as the catalytic Proton donor. Substrate is bound at residue G73–A75. A disordered region spans residues E116 to E139.

It belongs to the PanD family. In terms of assembly, heterooctamer of four alpha and four beta subunits. Pyruvate serves as cofactor. Post-translationally, is synthesized initially as an inactive proenzyme, which is activated by self-cleavage at a specific serine bond to produce a beta-subunit with a hydroxyl group at its C-terminus and an alpha-subunit with a pyruvoyl group at its N-terminus.

It is found in the cytoplasm. The enzyme catalyses L-aspartate + H(+) = beta-alanine + CO2. It functions in the pathway cofactor biosynthesis; (R)-pantothenate biosynthesis; beta-alanine from L-aspartate: step 1/1. In terms of biological role, catalyzes the pyruvoyl-dependent decarboxylation of aspartate to produce beta-alanine. The polypeptide is Aspartate 1-decarboxylase (Corynebacterium urealyticum (strain ATCC 43042 / DSM 7109)).